A 433-amino-acid chain; its full sequence is UDP-N-acetylmuramate--L-alanine ligase (433 aa).

Position 108–114 (108–114 (GAHGKTS)) interacts with ATP.

The protein belongs to the MurCDEF family.

The protein localises to the cytoplasm. The enzyme catalyses UDP-N-acetyl-alpha-D-muramate + L-alanine + ATP = UDP-N-acetyl-alpha-D-muramoyl-L-alanine + ADP + phosphate + H(+). The protein operates within cell wall biogenesis; peptidoglycan biosynthesis. Cell wall formation. The sequence is that of UDP-N-acetylmuramate--L-alanine ligase from Anoxybacillus flavithermus (strain DSM 21510 / WK1).